A 301-amino-acid polypeptide reads, in one-letter code: Pseudouridine-5'-phosphate glycosidase (301 aa).

Glu-23 acts as the Proton donor in catalysis. Substrate contacts are provided by Lys-84 and Val-104. Residue Asp-136 participates in Mn(2+) binding. 138–140 (SRD) is a substrate binding site. Catalysis depends on Lys-157, which acts as the Nucleophile.

This sequence belongs to the pseudouridine-5'-phosphate glycosidase family. As to quaternary structure, homotrimer. Mn(2+) serves as cofactor.

It carries out the reaction D-ribose 5-phosphate + uracil = psi-UMP + H2O. Catalyzes the reversible cleavage of pseudouridine 5'-phosphate (PsiMP) to ribose 5-phosphate and uracil. Functions biologically in the cleavage direction, as part of a pseudouridine degradation pathway. This chain is Pseudouridine-5'-phosphate glycosidase, found in Mycoplasmopsis agalactiae (strain NCTC 10123 / CIP 59.7 / PG2) (Mycoplasma agalactiae).